The sequence spans 518 residues: MNSSSDGANEGAGAAADNGPTKVAESIAIIIIDILICLGNLVIVVTLYKKSYLLSLSNKFVFSLTFSNLLLSMLVLPFVVVSSILREWIFGVVWCNFSALLYMLISSASMLTLGIIAIDRYYAVLYPMVYPMKITGNRAVLALVYVWLHSLIGCLPPLFGWSTLEFDHFKWMCVAAWHKEAGYTAFWQVWCALLPFIVMMICYGFIFRVARIKARKIHCGTVIIVQEASQKNGRKNSSTSTSSSGSRKNGFSSIVYSANQCKALITILVVIGAFVLTWGPYMIVISTEALKGKNSVSPVLETLATWLSFTSAICHPLIYGLWNKTVRKELLGMCFGNRYRDPFHQQHRTSRMFSISNRITDLGLSPHLTALMARGTESEHQSTTTNTGFSCSNESGTDVMLLDDTSSDATQLHRVIYSRRKSSVTFEDEVEQKNDARTMPTQPTAPSESLESYAFNLAKAIEMDAKISLFGEDVFPSNVQALPGNSGINRNRINFIQKQRVQLQSIEEGNIETSKCDV.

Topologically, residues 1–26 (MNSSSDGANEGAGAAADNGPTKVAES) are extracellular. Asn2 carries N-linked (GlcNAc...) asparagine glycosylation. Residues 27–47 (IAIIIIDILICLGNLVIVVTL) traverse the membrane as a helical segment. Over 48-59 (YKKSYLLSLSNK) the chain is Cytoplasmic. A helical membrane pass occupies residues 60-80 (FVFSLTFSNLLLSMLVLPFVV). The Extracellular portion of the chain corresponds to 81-97 (VSSILREWIFGVVWCNF). Cys95 and Cys173 are joined by a disulfide. Asn96 carries N-linked (GlcNAc...) asparagine glycosylation. Residues 98-118 (SALLYMLISSASMLTLGIIAI) form a helical membrane-spanning segment. Residues 119 to 138 (DRYYAVLYPMVYPMKITGNR) lie on the Cytoplasmic side of the membrane. Residues 139-159 (AVLALVYVWLHSLIGCLPPLF) form a helical membrane-spanning segment. The Extracellular segment spans residues 160–185 (GWSTLEFDHFKWMCVAAWHKEAGYTA). The helical transmembrane segment at 186–206 (FWQVWCALLPFIVMMICYGFI) threads the bilayer. At 207-264 (FRVARIKARKIHCGTVIIVQEASQKNGRKNSSTSTSSSGSRKNGFSSIVYSANQCKAL) the chain is on the cytoplasmic side. A helical membrane pass occupies residues 265 to 285 (ITILVVIGAFVLTWGPYMIVI). Topologically, residues 286 to 301 (STEALKGKNSVSPVLE) are extracellular. The helical transmembrane segment at 302–322 (TLATWLSFTSAICHPLIYGLW) threads the bilayer. At 323–518 (NKTVRKELLG…GNIETSKCDV (196 aa)) the chain is on the cytoplasmic side. Residues 429-448 (EVEQKNDARTMPTQPTAPSE) are disordered. Residues 439–448 (MPTQPTAPSE) are compositionally biased toward polar residues.

Belongs to the G-protein coupled receptor 1 family.

The protein localises to the cell projection. It localises to the cilium membrane. The protein resides in the cell membrane. Its function is as follows. Key negative regulator of Shh signaling during neural tube development. Recruited to primary cilia and acts as a regulator of the PKA-dependent basal repression machinery in Shh signaling by increasing cAMP levels, leading to promote the PKA-dependent processing of gli3 into gli3r and repress the Shh signaling. In presence of shh, it is removed from primary cilia, preventing its activity and allowing activation of the Shh signaling. The sequence is that of G-protein coupled receptor 161 (gpr161) from Xenopus tropicalis (Western clawed frog).